Here is a 181-residue protein sequence, read N- to C-terminus: Oligoribonuclease (181 aa).

In terms of domain architecture, Exonuclease spans Leu8–Leu171. Tyr129 is a catalytic residue.

The protein belongs to the oligoribonuclease family.

Its subcellular location is the cytoplasm. 3'-to-5' exoribonuclease specific for small oligoribonucleotides. The sequence is that of Oligoribonuclease from Photobacterium profundum (strain SS9).